The following is a 129-amino-acid chain: Glycine cleavage system H protein (129 aa).

In terms of domain architecture, Lipoyl-binding spans 24–106 (SYTVGITEHA…FGDGWFFRVM (83 aa)). Lys-65 carries the post-translational modification N6-lipoyllysine.

It belongs to the GcvH family. As to quaternary structure, the glycine cleavage system is composed of four proteins: P, T, L and H. (R)-lipoate is required as a cofactor.

Functionally, the glycine cleavage system catalyzes the degradation of glycine. The H protein shuttles the methylamine group of glycine from the P protein to the T protein. This Shewanella frigidimarina (strain NCIMB 400) protein is Glycine cleavage system H protein.